We begin with the raw amino-acid sequence, 369 residues long: Phenylalanine--tRNA ligase alpha subunit (369 aa).

Glu-270 serves as a coordination point for Mg(2+).

The protein belongs to the class-II aminoacyl-tRNA synthetase family. Phe-tRNA synthetase alpha subunit type 1 subfamily. Tetramer of two alpha and two beta subunits. Mg(2+) is required as a cofactor.

The protein localises to the cytoplasm. The catalysed reaction is tRNA(Phe) + L-phenylalanine + ATP = L-phenylalanyl-tRNA(Phe) + AMP + diphosphate + H(+). This Phenylobacterium zucineum (strain HLK1) protein is Phenylalanine--tRNA ligase alpha subunit.